A 335-amino-acid polypeptide reads, in one-letter code: MSPSATDNSDGPDATVLTLRKVLTSESEPLARRFRALFSLKYLACQQPATEKTLPAIQAIAAAFTSPSALLKHELAYCLGQTRNPESVPYLQEVVKDTEQDTMCRHEAAEALGALGYEDSLEILKVLRDNKDEPDVIRETCDIAVDRILWENSEQRKAEKLKASDFTSIDPAPPLPMATSEPSIPDIEKRLLDTSLPLFQRYRAMFALRDLASPPDLPTATHAVEALAKGLKDPSALFRHEIAFVFGQLSHPASIPSLTEALSDQNEVGMVRHEAAEALGSLGDCEGVEDTLKKFLNDPEQVVRDSVIVALDMAEYEKNGEIEYALVPDSGVAAA.

HEAT-like PBS-type repeat units follow at residues Leu71–Asp97, Cys104–Asn130, Gln200–Asp233, Phe238–Asp264, and Val271–Asp298. Fe cation contacts are provided by His73, Glu74, His106, and Glu107. Residues His240, Glu241, His273, and Glu274 each contribute to the Fe cation site.

The protein belongs to the deoxyhypusine hydroxylase family. It depends on Fe(2+) as a cofactor.

It is found in the cytoplasm. Its subcellular location is the nucleus. It catalyses the reaction [eIF5A protein]-deoxyhypusine + AH2 + O2 = [eIF5A protein]-hypusine + A + H2O. Its pathway is protein modification; eIF5A hypusination. Catalyzes the hydroxylation of the N(6)-(4-aminobutyl)-L-lysine intermediate to form hypusine, an essential post-translational modification only found in mature eIF-5A factor. This is Deoxyhypusine hydroxylase (lia1) from Aspergillus clavatus (strain ATCC 1007 / CBS 513.65 / DSM 816 / NCTC 3887 / NRRL 1 / QM 1276 / 107).